We begin with the raw amino-acid sequence, 147 residues long: Hemoglobin subunit beta (147 aa).

N-acetylvaline is present on Val-2. A Globin domain is found at 3–147; it reads HLTGDEKAAV…VANALAHKYH (145 aa). Thr-13 carries the post-translational modification Phosphothreonine. The residue at position 45 (Ser-45) is a Phosphoserine. Lys-60 carries the post-translational modification N6-acetyllysine. A heme b-binding site is contributed by His-64. Lys-83 is subject to N6-acetyllysine. Heme b is bound at residue His-93. The residue at position 94 (Cys-94) is an S-nitrosocysteine. At Lys-145 the chain carries N6-acetyllysine.

It belongs to the globin family. Heterotetramer of two alpha chains and two beta chains. Red blood cells.

In terms of biological role, involved in oxygen transport from the lung to the various peripheral tissues. This is Hemoglobin subunit beta (HBB) from Saimiri sciureus (Common squirrel monkey).